Consider the following 703-residue polypeptide: Peptide transporter CstA (703 aa).

16 consecutive transmembrane segments (helical) span residues 6-26 (TKIL…YLAL), 29-49 (GESV…MIGY), 87-107 (VLFG…GPIL), 118-138 (LWIL…VLFI), 162-182 (VAMV…AMVV), 190-210 (PWGL…GIYM), 221-241 (ASII…VIAA), 256-276 (LAIV…WFLL), 282-302 (LSTF…VLVA), 319-339 (GPVF…CGAI), 374-394 (AVAI…YFAI), 463-483 (LMAF…LTAV), 514-534 (GLLA…QGAI), 547-567 (FGVS…TILV), 574-594 (YTWV…YGGI), and 660-680 (AILC…CIGI).

Belongs to the peptide transporter carbon starvation (CstA) (TC 2.A.114) family.

The protein localises to the cell inner membrane. Its function is as follows. Involved in the uptake of dipeptides and tripeptides. May influence host-pathogen interactions. Involved in motility and agglutination, and has a role in stimulation of dendritic cells. The chain is Peptide transporter CstA from Campylobacter jejuni subsp. jejuni serotype O:2 (strain ATCC 700819 / NCTC 11168).